The sequence spans 407 residues: Probable protein S-acyltransferase 9 (407 aa).

A run of 2 helical transmembrane segments spans residues 28 to 48 and 62 to 82; these read WSIP…SVFV and GHVF…LLFL. Residues 136-179 form the DHHC domain; that stretch reads KYCDTCMLYRPPRCSHCSICNNCVERFDHHCPWRNYRYFFMFVS. The active-site S-palmitoyl cysteine intermediate is C166. 2 consecutive transmembrane segments (helical) span residues 174-194 and 217-237; these read FFMF…MSAL and AVML…LTGF. Residues 300-407 form a disordered region; that stretch reads LATTWERPEE…RSYAAAEEGR (108 aa). The span at 346–356 shows a compositional bias: basic and acidic residues; the sequence is DTAHHKIDIDQ.

Belongs to the DHHC palmitoyltransferase family. As to expression, mainly expressed in seeds.

It is found in the cell membrane. The enzyme catalyses L-cysteinyl-[protein] + hexadecanoyl-CoA = S-hexadecanoyl-L-cysteinyl-[protein] + CoA. Its function is as follows. Palmitoyl acyltransferase. This is Probable protein S-acyltransferase 9 (PAT09) from Arabidopsis thaliana (Mouse-ear cress).